The sequence spans 892 residues: Dipeptidyl peptidase 8 (892 aa).

Catalysis depends on charge relay system residues Ser749, Asp827, and His859.

Belongs to the peptidase S9B family. DPPIV subfamily. Homodimer. Forms a ternary complex with NLRP1, composed of a DPP8 homodimer, one full-length NLRP1 protein, and one cleaved C-terminus of NLRP1 (NACHT, LRR and PYD domains-containing protein 1, C-terminus). Forms a ternary complex with CARD8, composed of a DPP8 homodimer, one full-length NLRP1 protein, and one cleaved C-terminus of CARD8 (Caspase recruitment domain-containing protein 8, C-terminus). In the ternary complex, only one subunit of the DPP8 homodimer is bound to NLRP1 or CARD8.

It localises to the cytoplasm. The catalysed reaction is Release of an N-terminal dipeptide, Xaa-Yaa-|-Zaa-, from a polypeptide, preferentially when Yaa is Pro, provided Zaa is neither Pro nor hydroxyproline.. Inhibited by zinc. Inhibited by the serine proteinase inhibitor 4-(2-aminoethyl)benzenesulphonyl fluoride (AEBSF), and by di-isopropylfluorophosphate. Specifically inhibited by isoindoline derivatives. Inhibited by Val-boroPro (Talabostat, PT-100), a non-selective inhibitor, which triggers pyroptosis in monocytes and macrophages. Dipeptidyl peptidase that cleaves off N-terminal dipeptides from proteins having a Pro or Ala residue at position 2. Acts as a key inhibitor of caspase-1-dependent monocyte and macrophage pyroptosis in resting cells by preventing activation of NLRP1 and CARD8. Sequesters the cleaved C-terminal part of NLRP1 and CARD8, which respectively constitute the active part of the NLRP1 and CARD8 inflammasomes, in a ternary complex, thereby preventing their oligomerization and activation. The dipeptidyl peptidase activity is required to suppress NLRP1 and CARD8; however, neither NLRP1 nor CARD8 are bona fide substrates of DPP8, suggesting the existence of substrate(s) required for NLRP1 and CARD8 inhibition. The protein is Dipeptidyl peptidase 8 of Mus musculus (Mouse).